Reading from the N-terminus, the 142-residue chain is Universal stress protein C (142 aa).

This sequence belongs to the universal stress protein A family.

The protein resides in the cytoplasm. Functionally, required for resistance to DNA-damaging agents. The sequence is that of Universal stress protein C (uspC) from Escherichia coli O157:H7.